The sequence spans 450 residues: MPSTDTIAAVATAVAPGQGGIAVIRLSGPAAEATGRSVVHCPGRQEWGSHRVVYGHVIDSEGRRLDEVLLLLMRGPRSFTGEDVVEIHCHGGVIAVQRVLEKVLRQPGVRRAQPGEFSQRAVLNGRLDLTRAEAVSELVAARSRRAAELAMAGLDGGIQAEITVLRERLLDQLTELEARVDFEEDLPPLDGEALLQQLQAVRLELQQLVRDGERGDALRQGLRVALVGRPNVGKSSLLNRLSRRERAIVTDLPGTTRDLLESEIVLEGVPITLLDTAGIRSTDDAVEQLGIARSEQALATADVVLLVLDGHAGWTAEDAALLARIPAQIPRILVANKADLPAGAFPQPVDVQLSALEGMGEADLVQALLERCGAAGTDGMLVALNQRQRDLAARAAEALARSQEVAAQQLPWDFWTIDLREAIRALGEITGEELTEAVLDRVFSRFCIGK.

Positions 25, 86, and 126 each coordinate (6S)-5-formyl-5,6,7,8-tetrahydrofolate. In terms of domain architecture, TrmE-type G spans Gly-221–Gly-373. Asn-231 serves as a coordination point for K(+). GTP is bound by residues Asn-231–Ser-236, Thr-250–Thr-256, Asp-275–Gly-278, and Asn-336–Asp-339. Ser-235 contributes to the Mg(2+) binding site. Positions 250, 252, and 255 each coordinate K(+). Thr-256 contacts Mg(2+). Lys-450 provides a ligand contact to (6S)-5-formyl-5,6,7,8-tetrahydrofolate.

It belongs to the TRAFAC class TrmE-Era-EngA-EngB-Septin-like GTPase superfamily. TrmE GTPase family. As to quaternary structure, homodimer. Heterotetramer of two MnmE and two MnmG subunits. K(+) serves as cofactor.

It localises to the cytoplasm. Its function is as follows. Exhibits a very high intrinsic GTPase hydrolysis rate. Involved in the addition of a carboxymethylaminomethyl (cmnm) group at the wobble position (U34) of certain tRNAs, forming tRNA-cmnm(5)s(2)U34. The chain is tRNA modification GTPase MnmE from Synechococcus sp. (strain CC9605).